Here is a 359-residue protein sequence, read N- to C-terminus: Peroxisome assembly protein 12 (359 aa).

Over 1 to 19 (MAEHGAHFTAASVADDQPS) the chain is Peroxisomal matrix. Residues 20 to 47 (IFEVVAQDSLMTAVRPALQHVVKVLAES) traverse the membrane as a helical segment. The Cytoplasmic portion of the chain corresponds to 48–51 (NPTH). The chain crosses the membrane as a helical span at residues 52 to 76 (YGFLWRWFDEIFTLLDLLLQQHYLS). The Peroxisomal matrix segment spans residues 77–109 (RTSASFSENFYGLKRIVMGDTHKSQRLASAGLP). Residues 110 to 139 (KQQLWKSIMFLVLLPYLKVKLEKLVSSLRE) traverse the membrane as a helical segment. Over 140 to 144 (EDEYS) the chain is Cytoplasmic. The helical transmembrane segment at 145 to 183 (IHPPSSRWKRFYRAFLAAYPFVNMAWEGWFLVQQLRYIL) threads the bilayer. Over 184–249 (GKAQHHSPLL…VGGVALSLST (66 aa)) the chain is Peroxisomal matrix. A helical membrane pass occupies residues 250–277 (GLSVGVFFLQFLDWWYSSENQETIKSLT). At 278-359 (ALPTPPPPVH…HLIKLYSPEN (82 aa)) the chain is on the cytoplasmic side. Cys304, Cys307, Cys325, and Cys328 together coordinate Zn(2+). The segment at 304–343 (CPLCRKTRVNDTVLATSGYVFCYRCVFHYVRSHQACPITG) adopts an RING-type; degenerate zinc-finger fold.

It belongs to the pex2/pex10/pex12 family. Component of the PEX2-PEX10-PEX12 retrotranslocation channel, composed of PEX2, PEX10 and PEX12. Interacts with PEX19 via its cytoplasmic domain.

It localises to the peroxisome membrane. It participates in protein modification; protein ubiquitination. In terms of biological role, component of a retrotranslocation channel required for peroxisome organization by mediating export of the PEX5 receptor from peroxisomes to the cytosol, thereby promoting PEX5 recycling. The retrotranslocation channel is composed of PEX2, PEX10 and PEX12; each subunit contributing transmembrane segments that coassemble into an open channel that specifically allows the passage of PEX5 through the peroxisomal membrane. PEX12 also regulates PEX5 recycling by activating the E3 ubiquitin-protein ligase activity of PEX10. When PEX5 recycling is compromised, PEX12 stimulates PEX10-mediated polyubiquitination of PEX5, leading to its subsequent degradation. This Homo sapiens (Human) protein is Peroxisome assembly protein 12.